We begin with the raw amino-acid sequence, 341 residues long: Cyanuric acid amidohydrolase (341 aa).

The interval 1-90 (MAPIEILKFP…HVTFFLRSPG (90 aa)) is RU A. Residues Arg51 and 71–72 (SG) each bind substrate. The interval 95–229 (GLSAAVGHTR…CHILVLASTS (135 aa)) is RU B. Residue Lys144 is part of the active site. Residues Arg176 and 212–213 (SS) each bind substrate. Ser212 functions as the Nucleophile in the catalytic mechanism. Positions 235–341 (LHAVSRPMAD…SLCLVYETSI (107 aa)) are RU C. Glu273 serves as a coordination point for Mg(2+). Substrate contacts are provided by residues Arg300 and 319–320 (SG). Mg(2+) contacts are provided by Ala322, Gln325, Gly326, Pro327, and Gly330.

This sequence belongs to the cyclic amide hydrolase (CyAH) family. In terms of assembly, homotetramer.

It carries out the reaction cyanurate + H2O = 1-carboxybiuret + H(+). The protein operates within xenobiotic degradation; atrazine degradation; biuret from cyanurate: step 1/1. Its activity is regulated as follows. Inhibited by barbituric acid. In terms of biological role, responsible for the hydrolysis of cyanuric acid, an intermediate formed during catabolism of s-triazine based compounds in herbicides such as atrazine and polymers such as melamine. Catalyzes the hydrolytic opening of the s-triazine ring of cyanuric acid (2,4,6-trihydroxy-s-triazine) to yield carbon dioxide and carboxybiuret, which spontaneously decarboxylates to biuret. Only active on cyanuric acid and N-methylisocyanuric acid. This Sarocladium sp protein is Cyanuric acid amidohydrolase.